The primary structure comprises 121 residues: Large ribosomal subunit protein bL12 (121 aa).

It belongs to the bacterial ribosomal protein bL12 family. In terms of assembly, homodimer. Part of the ribosomal stalk of the 50S ribosomal subunit. Forms a multimeric L10(L12)X complex, where L10 forms an elongated spine to which 2 to 4 L12 dimers bind in a sequential fashion. Binds GTP-bound translation factors.

Forms part of the ribosomal stalk which helps the ribosome interact with GTP-bound translation factors. Is thus essential for accurate translation. This chain is Large ribosomal subunit protein bL12, found in Lactobacillus delbrueckii subsp. bulgaricus (strain ATCC BAA-365 / Lb-18).